A 173-amino-acid chain; its full sequence is Pathogenesis-related protein 1A/1B (173 aa).

The signal sequence occupies residues 1 to 20 (MSTSAVLFLLLAVFAAGASA).

The protein belongs to the thaumatin family.

This Hordeum vulgare (Barley) protein is Pathogenesis-related protein 1A/1B.